The following is a 292-amino-acid chain: MQELIKRTLPQDDALNQAIVNELRSQNWAGFLNYSQVQQLCHNFELTPLKLAMHLLPLAASYSHTAISHFNVGAIAIGEQGDFYFGANQEFANSAIQQTIHAEQSAISHAWLRNERRISDMVVNYTPCGHCRQFMNELHGAEKISIHLPHSQNNPLHSYLPDAFGPKDLDIAAHLLADENHDLIADHQDDLINQAILAANQSHCPYSNSPHGIAILFKNGDMVTGRYAENAAFNPSLPALQTALNFAYLNDKKLSDIERIVMAEKALKLSHKTMAETLLSTLTSVELEYYSL.

CMP/dCMP-type deaminase domains follow at residues 47–167 (TPLK…FGPK) and 186–292 (DHQD…YYSL). A substrate-binding site is contributed by 88–90 (NQE). Position 101 (H101) interacts with Zn(2+). E103 serves as the catalytic Proton donor. 2 residues coordinate Zn(2+): C128 and C131.

This sequence belongs to the cytidine and deoxycytidylate deaminase family. In terms of assembly, homodimer. It depends on Zn(2+) as a cofactor.

It catalyses the reaction cytidine + H2O + H(+) = uridine + NH4(+). The catalysed reaction is 2'-deoxycytidine + H2O + H(+) = 2'-deoxyuridine + NH4(+). Functionally, this enzyme scavenges exogenous and endogenous cytidine and 2'-deoxycytidine for UMP synthesis. The protein is Cytidine deaminase of Haemophilus influenzae (strain PittEE).